Reading from the N-terminus, the 359-residue chain is tRNA-specific 2-thiouridylase MnmA (359 aa).

ATP contacts are provided by residues 9 to 16 (GMSGGVDS) and M35. The active-site Nucleophile is C105. An intrachain disulfide couples C105 to C203. G129 provides a ligand contact to ATP. Residues 153-155 (KDQ) are interaction with tRNA. The active-site Cysteine persulfide intermediate is the C203. Residues 309–310 (RY) are interaction with tRNA.

The protein belongs to the MnmA/TRMU family.

It is found in the cytoplasm. The catalysed reaction is S-sulfanyl-L-cysteinyl-[protein] + uridine(34) in tRNA + AH2 + ATP = 2-thiouridine(34) in tRNA + L-cysteinyl-[protein] + A + AMP + diphosphate + H(+). Catalyzes the 2-thiolation of uridine at the wobble position (U34) of tRNA, leading to the formation of s(2)U34. This chain is tRNA-specific 2-thiouridylase MnmA, found in Acetivibrio thermocellus (strain ATCC 27405 / DSM 1237 / JCM 9322 / NBRC 103400 / NCIMB 10682 / NRRL B-4536 / VPI 7372) (Clostridium thermocellum).